The primary structure comprises 360 residues: Phosphoserine aminotransferase (360 aa).

Arg-42 is an L-glutamate binding site. Pyridoxal 5'-phosphate-binding residues include Trp-102, Thr-152, Asp-171, and Gln-194. Lys-195 bears the N6-(pyridoxal phosphate)lysine mark. 237-238 (NT) provides a ligand contact to pyridoxal 5'-phosphate.

It belongs to the class-V pyridoxal-phosphate-dependent aminotransferase family. SerC subfamily. As to quaternary structure, homodimer. Requires pyridoxal 5'-phosphate as cofactor.

The protein resides in the cytoplasm. The enzyme catalyses O-phospho-L-serine + 2-oxoglutarate = 3-phosphooxypyruvate + L-glutamate. It catalyses the reaction 4-(phosphooxy)-L-threonine + 2-oxoglutarate = (R)-3-hydroxy-2-oxo-4-phosphooxybutanoate + L-glutamate. The protein operates within amino-acid biosynthesis; L-serine biosynthesis; L-serine from 3-phospho-D-glycerate: step 2/3. It participates in cofactor biosynthesis; pyridoxine 5'-phosphate biosynthesis; pyridoxine 5'-phosphate from D-erythrose 4-phosphate: step 3/5. Catalyzes the reversible conversion of 3-phosphohydroxypyruvate to phosphoserine and of 3-hydroxy-2-oxo-4-phosphonooxybutanoate to phosphohydroxythreonine. The polypeptide is Phosphoserine aminotransferase (Coxiella burnetii (strain RSA 331 / Henzerling II)).